The chain runs to 109 residues: uncharacterized protein (109 aa).

The protein resides in the mitochondrion. This is an uncharacterized protein from Saccharomyces cerevisiae (strain ATCC 204508 / S288c) (Baker's yeast).